We begin with the raw amino-acid sequence, 134 residues long: Small ribosomal subunit protein uS12 (134 aa).

D89 carries the post-translational modification 3-methylthioaspartic acid. Residues 101 to 134 (TLDASGVNGRNQSRSKYGTKRPKPGQAAAGGKKK) are disordered. Low complexity predominate over residues 125 to 134 (GQAAAGGKKK).

Belongs to the universal ribosomal protein uS12 family. Part of the 30S ribosomal subunit. Contacts proteins S8 and S17. May interact with IF1 in the 30S initiation complex.

Its function is as follows. With S4 and S5 plays an important role in translational accuracy. Functionally, interacts with and stabilizes bases of the 16S rRNA that are involved in tRNA selection in the A site and with the mRNA backbone. Located at the interface of the 30S and 50S subunits, it traverses the body of the 30S subunit contacting proteins on the other side and probably holding the rRNA structure together. The combined cluster of proteins S8, S12 and S17 appears to hold together the shoulder and platform of the 30S subunit. This Gemmatimonas aurantiaca (strain DSM 14586 / JCM 11422 / NBRC 100505 / T-27) protein is Small ribosomal subunit protein uS12.